We begin with the raw amino-acid sequence, 254 residues long: Alcohol dehydrogenase 1 (254 aa).

10 to 33 (FVAGLGGIGLDTSREIVKSGPKNL) is a binding site for NAD(+). Position 138 (S138) interacts with substrate. The active-site Proton acceptor is the Y151.

Belongs to the short-chain dehydrogenases/reductases (SDR) family. In terms of assembly, homodimer.

The catalysed reaction is a primary alcohol + NAD(+) = an aldehyde + NADH + H(+). It carries out the reaction a secondary alcohol + NAD(+) = a ketone + NADH + H(+). The chain is Alcohol dehydrogenase 1 (Adh1) from Drosophila montana (Fruit fly).